The sequence spans 481 residues: UDP-glycosyltransferase 71K2 (481 aa).

UDP-alpha-D-glucose is bound by residues serine 285, 350-351 (WA), 368-376 (HCGWNSILE), and 390-393 (YAEQ).

The protein belongs to the UDP-glycosyltransferase family.

In terms of biological role, glycosyltransferase that possesses chalcone and flavonol 2'-O-glycosyltransferase activity. Converts phloretin to phlorizin (phloretin 2'-O-glucoside), a potent antioxidant. Possesses glycosyltransferase activity toward quercetin, isoliquiritigenin, butein and caffeic acid. This is UDP-glycosyltransferase 71K2 from Pyrus communis (Pear).